We begin with the raw amino-acid sequence, 188 residues long: dCTP deaminase (188 aa).

DCTP-binding positions include 111–116, 135–137, Gln156, Tyr170, and Gln180; these read KSTYAR and TLE. Glu137 acts as the Proton donor/acceptor in catalysis.

The protein belongs to the dCTP deaminase family. In terms of assembly, homotrimer.

It carries out the reaction dCTP + H2O + H(+) = dUTP + NH4(+). It participates in pyrimidine metabolism; dUMP biosynthesis; dUMP from dCTP (dUTP route): step 1/2. Catalyzes the deamination of dCTP to dUTP. This Cupriavidus pinatubonensis (strain JMP 134 / LMG 1197) (Cupriavidus necator (strain JMP 134)) protein is dCTP deaminase.